Consider the following 167-residue polypeptide: I-Kappa-B like protein F2 (167 aa).

ANK repeat units follow at residues 54–86 (HGKQ…DING), 91–121 (FGNT…NMGI), and 125–154 (LFKT…RCGV).

It belongs to the polydnaviridae I-Kappa-B-like protein family.

In terms of biological role, suppresses the host immune response through NF-kappa-B inactivation. Possesses ankyrin repeat domains required for NF-kappa-B binding but lacks the regulatory regions required for dissociation from NF-kappa-B and degradation. Therefore, prevents host NF-kappa-B release and subsequent activation. The sequence is that of I-Kappa-B like protein F2 (F3) from Microplitis demolitor bracovirus (isolate Webb) (MdBV).